A 533-amino-acid chain; its full sequence is T-complex protein 1 subunit delta (533 aa).

A disordered region spans residues 1–24; the sequence is MVVKPAARGMKPQGQAYKDKSKPA.

It belongs to the TCP-1 chaperonin family. As to quaternary structure, heterooligomeric complex of about 850 to 900 kDa that forms two stacked rings, 12 to 16 nm in diameter.

The protein localises to the cytoplasm. Molecular chaperone; assists the folding of proteins upon ATP hydrolysis. Known to play a role, in vitro, in the folding of actin and tubulin. The polypeptide is T-complex protein 1 subunit delta (Ochlerotatus triseriatus (Eastern treehole mosquito)).